We begin with the raw amino-acid sequence, 156 residues long: MKLQLIAVGTKMPDWVTRGFEEYQRRFPRDMALELIEIPAGKRGKNADIARILQKEGDLMLAAVAKGNHIVSLDLPGKNWTTPELAEQLSKWQLDGRDVSLLIGGPEGLSPACKEAASQSWCLSALTLPHPLVRVLVAESLYRAWSINNNHPYHRE.

Residues Leu-73, Gly-104, and 123-128 each bind S-adenosyl-L-methionine; that span reads LSALTL.

This sequence belongs to the RNA methyltransferase RlmH family. As to quaternary structure, homodimer.

Its subcellular location is the cytoplasm. It catalyses the reaction pseudouridine(1915) in 23S rRNA + S-adenosyl-L-methionine = N(3)-methylpseudouridine(1915) in 23S rRNA + S-adenosyl-L-homocysteine + H(+). Functionally, specifically methylates the pseudouridine at position 1915 (m3Psi1915) in 23S rRNA. The sequence is that of Ribosomal RNA large subunit methyltransferase H from Shewanella denitrificans (strain OS217 / ATCC BAA-1090 / DSM 15013).